A 328-amino-acid polypeptide reads, in one-letter code: L-asparaginase (328 aa).

An Asparaginase/glutaminase domain is found at 1 to 320 (MKLLVLGTGG…EEIRKIMERN (320 aa)). Catalysis depends on T11, which acts as the Nucleophile; O-isoaspartyl threonine intermediate. L-aspartate is bound by residues T11, D53, S54, T85, and D86. Catalysis depends on charge relay system residues T85, D86, K156, and Y274.

This sequence belongs to the asparaginase 1 family. As to quaternary structure, homodimer.

It catalyses the reaction L-asparagine + H2O = L-aspartate + NH4(+). Its activity is regulated as follows. Chohan et al. found that divalent metal ions and EDTA do not have any significant effect on enzyme activity, indicating that activity is independent of metal ions. In another study, Hong et al. showed that activity is enhanced by Mg(2+), significantly inhibited by Co(2+) and Ni(2+), and moderately inhibited by Ca(2+), Cu(2+) and EDTA. Unfolding studies suggest that urea cannot induce complete unfolding and inactivation of the enzyme even at a concentration 8 M. However, in the presence of 4 M guanidine hydrochloride, the enzyme structure is unfolded with complete loss of enzyme activity. Catalyzes the hydrolysis of L-asparagine into L-aspartate and ammonia. Also displays D-asparaginase activity, which is about 50% of the L-asparaginase activity. Does not exhibit glutaminase activity. This Thermococcus kodakarensis (strain ATCC BAA-918 / JCM 12380 / KOD1) (Pyrococcus kodakaraensis (strain KOD1)) protein is L-asparaginase.